Reading from the N-terminus, the 156-residue chain is Small ribosomal subunit protein uS7 (156 aa).

Belongs to the universal ribosomal protein uS7 family. In terms of assembly, part of the 30S ribosomal subunit. Contacts proteins S9 and S11.

One of the primary rRNA binding proteins, it binds directly to 16S rRNA where it nucleates assembly of the head domain of the 30S subunit. Is located at the subunit interface close to the decoding center, probably blocks exit of the E-site tRNA. The chain is Small ribosomal subunit protein uS7 from Lachnospira eligens (strain ATCC 27750 / DSM 3376 / VPI C15-48 / C15-B4) (Eubacterium eligens).